We begin with the raw amino-acid sequence, 208 residues long: Protein-L-isoaspartate O-methyltransferase (208 aa).

The active site involves Ser59.

Belongs to the methyltransferase superfamily. L-isoaspartyl/D-aspartyl protein methyltransferase family.

It localises to the cytoplasm. The enzyme catalyses [protein]-L-isoaspartate + S-adenosyl-L-methionine = [protein]-L-isoaspartate alpha-methyl ester + S-adenosyl-L-homocysteine. Functionally, catalyzes the methyl esterification of L-isoaspartyl residues in peptides and proteins that result from spontaneous decomposition of normal L-aspartyl and L-asparaginyl residues. It plays a role in the repair and/or degradation of damaged proteins. The sequence is that of Protein-L-isoaspartate O-methyltransferase from Aliivibrio fischeri (strain ATCC 700601 / ES114) (Vibrio fischeri).